We begin with the raw amino-acid sequence, 696 residues long: Catalase (696 aa).

Catalysis depends on residues histidine 64 and asparagine 137. The interval 187 to 211 (SLAQGSQISSERGSPKAYSNTEPNK) is disordered. Over residues 189–208 (AQGSQISSERGSPKAYSNTE) the composition is skewed to polar residues. Heme is bound at residue tyrosine 353.

The protein belongs to the catalase family. Heme serves as cofactor.

The enzyme catalyses 2 H2O2 = O2 + 2 H2O. In terms of biological role, occurs in almost all aerobically respiring organisms and serves to protect cells from the toxic effects of hydrogen peroxide. The chain is Catalase from Penicillium janthinellum (Penicillium vitale).